Consider the following 494-residue polypeptide: MKMLEQNPQYLYFFSLFLVTIFLYKWLTLKKTPLKNLPPSPPQYPIIGNLHQIGPDPQASLRDLAQKYGPLMFLKFGTVPVLVVSSADAAREALKTHDLVFADRPYSSVANKIFYNGKDMVFARYTEYWRQVKSICVTQLLSNKRVNSFHYVREEEVDLLVQNLENSHSKVANLTELLIEVTGNVVCRVSVGSGDKVDSYKILILEIMDMLGYSRSIEDFFPLLGWVDWLTGLRGKVAEAAKGVDTFLEGVLKEHLSTTGSKYNDFVSILLEIQEADAGSSMDNECIKSLIWDMLGAGTETISTALEWTLAALIKNPDAMFKLQNEVREIGKGKSKISEADLVKMNYLQAVMKESMRLYFTAPLLVPREARQDIKFMGYDISSGTQVLINAWAIARDPLLWDKPEEFRPERFLNSPIDYKGFHYEFLPFGAGRRGCPGIQFAMCINELVVANLVHKFNFELPDGKRLEDLDMTAASGITLRKKSPLLVVARPHV.

The chain crosses the membrane as a helical span at residues 12–29 (YFFSLFLVTIFLYKWLTL). Cys-436 lines the heme pocket.

The protein belongs to the cytochrome P450 family.

It is found in the endoplasmic reticulum membrane. The protein resides in the microsome membrane. The enzyme catalyses (7S)-marmesin + reduced [NADPH--hemoprotein reductase] + O2 = psoralen + acetone + oxidized [NADPH--hemoprotein reductase] + 2 H2O + H(+). With respect to regulation, inhibited by columbianetin. In terms of biological role, involved in linear furanocumarin (psoralen) biosynthesis. Converts marmesin to psoralen. This chain is Psoralen synthase (CYP71AJ1), found in Ammi majus (Bishop's weed).